Consider the following 276-residue polypeptide: MDLWTAAQALILGIVEGLTEFLPISSTGHQIIVADLIDFGGERAMAFNIIIQLGAILAVVWEFRRKILDVVVGLPKQQEAQRFTLNLLIAFMPAVVLGVIFADTIHHYLFNAITVATALVVGGVIMLWAERRVHTVRTETVDDMTWRDALKIGLVQCLAMIPGTSRSGSTIIGGLLFGLSRKAATEFSFFLAMPTMVGAAVYSGYKYRDMFRPDDFAVFAIGFITSFVFAMIAVRALLKFIATHSYAVFAWYRIAFGLLILATWQFGWIDWASAKA.

The next 6 membrane-spanning stretches (helical) occupy residues 43–63 (RAMA…VWEF), 85–105 (LNLL…ADTI), 109–129 (LFNA…MLWA), 183–203 (AATE…AVYS), 218–238 (VFAI…RALL), and 254–274 (IAFG…WASA).

Belongs to the UppP family.

It localises to the cell inner membrane. It carries out the reaction di-trans,octa-cis-undecaprenyl diphosphate + H2O = di-trans,octa-cis-undecaprenyl phosphate + phosphate + H(+). Functionally, catalyzes the dephosphorylation of undecaprenyl diphosphate (UPP). Confers resistance to bacitracin. The chain is Undecaprenyl-diphosphatase from Pseudomonas syringae pv. tomato (strain ATCC BAA-871 / DC3000).